Reading from the N-terminus, the 543-residue chain is Serine/threonine-protein kinase Chk2 (543 aa).

The segment at 1 to 66 is disordered; that stretch reads MSRESDVEAQ…SGTLSSLETV (66 aa). The span at 8–22 shows a compositional bias: polar residues; the sequence is EAQQSHGSSACSQPH. Low complexity predominate over residues 23 to 62; sequence GSVTQSQGSSSQSQGISSSSTSTMPNSSQSSHSSSGTLSS. Ser-62 carries the post-translational modification Phosphoserine; by PLK3. Thr-68 bears the Phosphothreonine; by ATM and MAP3K20 mark. Phosphoserine; by PLK3 is present on Ser-73. Residues 113-175 enclose the FHA domain; the sequence is YWFGRDKSCE…NGTFVNTELV (63 aa). The Protein kinase domain occupies 220-486; it reads YIMSKTLGSG…TEEALRHPWL (267 aa). Residues 227–234, Lys-249, and 302–308 contribute to the ATP site; these read GSGACGEV and ELMEGGE. The active-site Proton acceptor is Asp-347. Residues 351–352 and Asp-368 contribute to the ATP site; that span reads EN. The interval 368–394 is T-loop/activation segment; that stretch reads DFGHSKILGETSLMRTLCGTPTYLAPE. The residue at position 379 (Ser-379) is a Phosphoserine; by autocatalysis. Phosphothreonine; by autocatalysis is present on residues Thr-383 and Thr-387. Position 456 is a phosphoserine (Ser-456). Polar residues predominate over residues 506–517; it reads TALPQVLAQPST. The disordered stretch occupies residues 506–538; that stretch reads TALPQVLAQPSTSRKRPREGEAEGAETTKRPAV. The segment covering 523–534 has biased composition (basic and acidic residues); that stretch reads REGEAEGAETTK.

Belongs to the protein kinase superfamily. CAMK Ser/Thr protein kinase family. CHK2 subfamily. In terms of assembly, homodimer. Homodimerization is part of the activation process but the dimer may dissociate following activation. Interacts with PML. Interacts with TP53. Interacts with RB1; phosphorylates RB1. Interacts with BRCA1. Interacts (phosphorylated at Thr-68) with MDC1; requires ATM-mediated phosphorylation of CHEK2. Interacts with TP53BP1; modulates CHEK2 phosphorylation at Thr-68 in response to ionizing radiation. Interacts with CDC25A; phosphorylates CDC25A and mediates its degradation in response to ionizing radiation. Interacts with CUL1; mediates CHEK2 ubiquitination and regulation. Interacts with CDKN2AIP. Interacts (via protein kinase domain) with CCAR2 (via N-terminus). Interacts with SIRT1. Requires Mg(2+) as cofactor. In terms of processing, phosphorylated. Phosphorylated at Ser-73 by PLK3 in response to DNA damage, promoting phosphorylation at Thr-68 by ATM and the G2/M transition checkpoint. Phosphorylation at Thr-68 induces homodimerization. Autophosphorylates at Thr-383 and Thr-387 in the T-loop/activation segment upon dimerization to become fully active and phosphorylate its substrates like for instance CDC25C. DNA damage-induced autophosphorylation at Ser-379 induces CUL1-mediated ubiquitination and regulates the pro-apoptotic function. Phosphorylation at Ser-456 also regulates ubiquitination. Phosphorylated by PLK4. Post-translationally, ubiquitinated. CUL1-mediated ubiquitination regulates the pro-apoptotic function. Ubiquitination may also regulate protein stability. Ubiquitinated by RNF8 via 'Lys-48'-linked ubiquitination. As to expression, high expression is found in testis, spleen, colon and peripheral blood leukocytes. Low expression is found in other tissues.

Its subcellular location is the nucleus. The protein resides in the PML body. The protein localises to the nucleoplasm. It catalyses the reaction L-seryl-[protein] + ATP = O-phospho-L-seryl-[protein] + ADP + H(+). The catalysed reaction is L-threonyl-[protein] + ATP = O-phospho-L-threonyl-[protein] + ADP + H(+). Activated through phosphorylation at Thr-68 by ATM in response to DNA double-strand breaks. Activation is modulated by several mediators including MDC1 and TP53BP1. Induces homodimerization with exchange of the T-loop/activation segment between protomers and transphosphorylation of the protomers. The autophosphorylated kinase dimer is fully active. Negatively regulated by PPM1D through dephosphorylation of Thr-68. Functionally, serine/threonine-protein kinase which is required for checkpoint-mediated cell cycle arrest, activation of DNA repair and apoptosis in response to the presence of DNA double-strand breaks. May also negatively regulate cell cycle progression during unperturbed cell cycles. Following activation, phosphorylates numerous effectors preferentially at the consensus sequence [L-X-R-X-X-S/T]. Regulates cell cycle checkpoint arrest through phosphorylation of CDC25A, CDC25B and CDC25C, inhibiting their activity. Inhibition of CDC25 phosphatase activity leads to increased inhibitory tyrosine phosphorylation of CDK-cyclin complexes and blocks cell cycle progression. May also phosphorylate NEK6 which is involved in G2/M cell cycle arrest. Regulates DNA repair through phosphorylation of BRCA2, enhancing the association of RAD51 with chromatin which promotes DNA repair by homologous recombination. Also stimulates the transcription of genes involved in DNA repair (including BRCA2) through the phosphorylation and activation of the transcription factor FOXM1. Regulates apoptosis through the phosphorylation of p53/TP53, MDM4 and PML. Phosphorylation of p53/TP53 at 'Ser-20' by CHEK2 may alleviate inhibition by MDM2, leading to accumulation of active p53/TP53. Phosphorylation of MDM4 may also reduce degradation of p53/TP53. Also controls the transcription of pro-apoptotic genes through phosphorylation of the transcription factor E2F1. Tumor suppressor, it may also have a DNA damage-independent function in mitotic spindle assembly by phosphorylating BRCA1. Its absence may be a cause of the chromosomal instability observed in some cancer cells. Promotes the CCAR2-SIRT1 association and is required for CCAR2-mediated SIRT1 inhibition. Under oxidative stress, promotes ATG7 ubiquitination by phosphorylating the E3 ubiquitin ligase TRIM32 at 'Ser-55' leading to positive regulation of the autophagosme assembly. In terms of biological role, (Microbial infection) Phosphorylates herpes simplex virus 1/HHV-1 protein ICP0 and thus activates its SUMO-targeted ubiquitin ligase activity. The protein is Serine/threonine-protein kinase Chk2 of Homo sapiens (Human).